Consider the following 443-residue polypeptide: Tubulin beta-3 chain (443 aa).

8 residues coordinate GTP: Q11, E69, S138, G142, T143, G144, N204, and N226. Mg(2+) is bound at residue E69.

The protein belongs to the tubulin family. Dimer of alpha and beta chains. A typical microtubule is a hollow water-filled tube with an outer diameter of 25 nm and an inner diameter of 15 nM. Alpha-beta heterodimers associate head-to-tail to form protofilaments running lengthwise along the microtubule wall with the beta-tubulin subunit facing the microtubule plus end conferring a structural polarity. Microtubules usually have 13 protofilaments but different protofilament numbers can be found in some organisms and specialized cells. The cofactor is Mg(2+).

The protein resides in the cytoplasm. Its subcellular location is the cytoskeleton. Functionally, tubulin is the major constituent of microtubules, a cylinder consisting of laterally associated linear protofilaments composed of alpha- and beta-tubulin heterodimers. Microtubules grow by the addition of GTP-tubulin dimers to the microtubule end, where a stabilizing cap forms. Below the cap, tubulin dimers are in GDP-bound state, owing to GTPase activity of alpha-tubulin. This Echinococcus multilocularis (Fox tapeworm) protein is Tubulin beta-3 chain (TUB-3).